We begin with the raw amino-acid sequence, 699 residues long: Integrator complex subunit 10 (699 aa).

A phosphoserine mark is found at Ser-220 and Ser-370. Residue Lys-453 forms a Glycyl lysine isopeptide (Lys-Gly) (interchain with G-Cter in SUMO2) linkage.

The protein belongs to the Integrator subunit 10 family. Component of the Integrator complex, composed of core subunits INTS1, INTS2, INTS3, INTS4, INTS5, INTS6, INTS7, INTS8, INTS9/RC74, INTS10, INTS11/CPSF3L, INTS12, INTS13, INTS14 and INTS15. The core complex associates with protein phosphatase 2A subunits PPP2CA and PPP2R1A, to form the Integrator-PP2A (INTAC) complex. INTS10 is part of the tail subcomplex, composed of INTS10, INTS13, INTS14 and INTS15.

It is found in the nucleus. Functionally, component of the integrator complex, a multiprotein complex that terminates RNA polymerase II (Pol II) transcription in the promoter-proximal region of genes. The integrator complex provides a quality checkpoint during transcription elongation by driving premature transcription termination of transcripts that are unfavorably configured for transcriptional elongation: the complex terminates transcription by (1) catalyzing dephosphorylation of the C-terminal domain (CTD) of Pol II subunit POLR2A/RPB1 and SUPT5H/SPT5, (2) degrading the exiting nascent RNA transcript via endonuclease activity and (3) promoting the release of Pol II from bound DNA. The integrator complex is also involved in terminating the synthesis of non-coding Pol II transcripts, such as enhancer RNAs (eRNAs), small nuclear RNAs (snRNAs), telomerase RNAs and long non-coding RNAs (lncRNAs). Within the integrator complex, INTS10 is part of the integrator tail module that acts as a platform for the recruitment of transcription factors at promoters. May be not involved in the recruitment of cytoplasmic dynein to the nuclear envelope, probably as component of the integrator complex. This is Integrator complex subunit 10 (INTS10) from Macaca fascicularis (Crab-eating macaque).